The chain runs to 456 residues: Dolichyl-diphosphooligosaccharide--protein glycosyltransferase 48 kDa subunit (456 aa).

The first 42 residues, 1–42 (MGYFRCARAGSFGRRRKMEPSTAARAWALFWLLLPLLGAVCA), serve as a signal peptide directing secretion. Residues 43 to 427 (SGPRTLVLLD…YERFIPSAYP (385 aa)) lie on the Lumenal side of the membrane. Residues 428–447 (YYASAFSMMLGLFIFSIVFL) traverse the membrane as a helical segment. Residues 448 to 456 (HMKEKEKSD) lie on the Cytoplasmic side of the membrane.

Belongs to the DDOST 48 kDa subunit family. Component of the oligosaccharyltransferase (OST) complex. OST exists in two different complex forms which contain common core subunits RPN1, RPN2, OST48, OST4, DAD1 and TMEM258, either STT3A or STT3B as catalytic subunits, and form-specific accessory subunits. STT3A complex assembly occurs through the formation of 3 subcomplexes. Subcomplex 1 contains RPN1 and TMEM258, subcomplex 2 contains the STT3A-specific subunits STT3A, DC2/OSTC, and KCP2 as well as the core subunit OST4, and subcomplex 3 contains RPN2, DAD1, and OST48. The STT3A complex can form stable complexes with the Sec61 complex or with both the Sec61 and TRAP complexes. Interacts with SMIM22.

It is found in the endoplasmic reticulum membrane. It functions in the pathway protein modification; protein glycosylation. In terms of biological role, subunit of the oligosaccharyl transferase (OST) complex that catalyzes the initial transfer of a defined glycan (Glc(3)Man(9)GlcNAc(2) in eukaryotes) from the lipid carrier dolichol-pyrophosphate to an asparagine residue within an Asn-X-Ser/Thr consensus motif in nascent polypeptide chains, the first step in protein N-glycosylation. N-glycosylation occurs cotranslationally and the complex associates with the Sec61 complex at the channel-forming translocon complex that mediates protein translocation across the endoplasmic reticulum (ER). All subunits are required for a maximal enzyme activity. Required for the assembly of both SST3A- and SS3B-containing OST complexes. This Homo sapiens (Human) protein is Dolichyl-diphosphooligosaccharide--protein glycosyltransferase 48 kDa subunit.